Consider the following 4334-residue polypeptide: MSSDSRKTFVVTTIACAIAPAGQQDQYAAYLGQDENGAIASFLDSTQNTLQAGVSGLGTGQLQLKLSNAAEFPEGCEFSVVLSKLRAGPIRTEDVPAGVAVATVAHSPLSSLYHTLKDVYSPLIKSQTAEGVPVLDKRLSELLAQVQAGLGTAVRKGVPASAQEVADPNQAPLQEVVTPLDEINFWAELTNSPNAGPIKSSALQVSSALEPLRQSFEQLSSDAPEGEGGSIGWEGAKELVDLTTNALRAAWPVKLPIGGWAMGQKRADNFLRVVGAALATYVQRRVDRLAAAGRGDLWSAPFGEVRAVLVGASGLMTRWVQESTALVEDWRLGVDTGGHDWEGAAFADAYVRSFQERLEEIYNMREMVDELAKLVGREEAGSLGVQQVFAPFQGLQALQVSDFNTHVWKAAHEDFERRMGPIEQRISQKLKELFASVIIPSLTSAIGPGRGGDRAAAGGSLIQPQQVFAEIKRYSSLMGRKNIASALQSEKETLAKQVDRHLDSVQAEFDAHRDSATGGAKVAPVGRVTASIVERIMWCMQTLQKLGKVSEVLKHMLRGGVAGDEGSGGAALRNTLGVVSELQKEVEIFRKEQYSAWEEWMSEELGEMANWKNSKLMTFDSQNSHVKTHFNDQLVLLLREVRQLQSLGFGVRKDILNEVEIANKFYRYGMVLKQRANFYNNIATEMVQCQKPMMLKDALDFEKVLMNPKDAQGKEITWRNAAALDGYVRRLNEVADRLAEKNRTLRKWHSVLSDKVVTLAGTDLVRHKDKWAAGVKEMREIFGRLEAEGYSRESQQVWRQHWDFQLYKALEVQYLSGLEMINKTLPEVEVKMVFRQHRLQYDPPLEELRIRHVKDLLNTFLGLPLRMKGVSDLSERPGFFRPIVDANPTGIARVYAAAESLFTQLADELKKYQDWMVLGTLDLDEFADANLLEVSDWELNFRMLKAASRDAEKLPNEIRIECYKVSLAPVKGSIDEHMKKLQDTLVASLRRKTVAEKDQIEDFMKNGRELFTRQANTVEDIGLAGQEAKGLTAKLAEVQAARRRIDEKNKLLRQMAGGGRDAAFAVVDLTEVNNSWDAFTNQLQQFDAHLEEQKGNLAVQISRQLEEFKGKVAGMNSRWQELKPKSGPSGNPAVVLAKIQEYANAIKELREESAKLYKEAEAFKIDVPDFELMTEMETDVMATKAHWDRYADFLRERDEMANRDWLSMRDQVWKIEDFLAKWTKATAGKSDDPIAVILTQEIDNYTLCLPHLKSCLRGAGWEDTHWNQLFGLLGMKTSGPAAVSKETVTLTHFLEKADLVVKHADVIKSLDAQAQGEAVIRKALTELKMWGMAREFTFTESTQSVAGRQRRTPLIKEWRDAMTEVGDNQSLVASLKQSSYYNMFKDEVSSWENKLSFLQEGLTLLNQIQRKWVYLEPIFGRGALPSQQQRFRNVDEEFRRTMTSLESTKKVVTFADIPGIRDKLPQMAQQLDVCQRALADFLEEKRSQFPRFYFLGDDDLLEILGQARNPAVIQSHLKKLFAGIQKVKFSQDQSTIQAMQSMEGEVVDLAPTVRITEQIETWLGDLTRSMKNTLQQQNEVLCAGRMNDEFRAAASQCLQLKEAVAFTEKAEVALKAGSSGLAKLVTEMRAQLMKLTGSDFTGHHLLQLKKQALVLDFIHYCDVAEYLAKDKIGGTTEWGWTRQLRYYHRAEGSVKVAMAEATFDYTWEYQGNAAKLVYTPLTDKCYLTLTQGMALGYGGNPYGPAGTGKTESVKALGQALARQVLVFNCDEEFDFKSMGRIFVGLVKCGAWGCFDEFNRLDEEVLSAVSQQIQTIQLALKEGAKTMMFMDKTVEVDKNAGIFVTLNPAGKGYGGRSKLPDNLKQLFRSIAMTVPNNELIAEVLLLSEGFNHAKDLARKLVSLFSLSRELLSPQQHYDWGLRALKTVLGIAGRELRDARKAGQNVDAEIEAEIIIRSVAATKLPTLTFDDNSRFKALINDLFPGAKLTDARNEALEKALAEAAAACKMELTQQQIDRMLQLHLACEQRIGVIIVGPSGSGKSTLWELLEKAYERLGRKPIVYKMNPKAMPRQQLLGSMNMDTREWSDGVLTAAARKVVKEPLEQRSWIICDGDVDPEWIESLNSVLDDNRLLTMPNGERIQFANNVNFIFECHSLEFASPATVSRCGMLFMSDEAMEVERMLQRWLKVQATDNGDPGQMQSWMNDFFDKAFQWALSHPRAVETTKGGILDSGLSHLKLGPGSKQEFMAGLCRGLGSNMNPDIRNQFYNDMARMSGEGGIMDVGVATDPLIVLGDELRERGMDEADGGLVVTPEVTQNLLMMAPWFKNRDPFLVVGPEGCGKGALLDYCFKRIMGVQVAVVNCSAQTSAANVVQKLVQVCGKPVTTTSGKALRPPDNTRVILYLKDLNLPRPDKYNTCQLISFLQQLIAHHGYYDENLDFIRVERVQIVGSMTPPGSVGRHALSTRFTALVRIVTMGYPDRENLATIYTNMAQRVLANSKTASSVSPAALSKAMLEVYSSVRERFTPNDYPHYEFNARELSDWINGIQRYSLEGGLTLVQAIAHEGLRVFRDRLVGDHQEQFTSMLYGTLTSLLGYKPDATPWYTSTLGASAEERISGDLTKIKMLRWEQDTFAELVAEKLKGYEREHKELNLLLFPEVLERVSRFDRVLSQQGGSLLLCGNSGVGRRSLMLLLAYMHNMDFITPKMTKNYDLKSFRNDLKEVLRRAGVEAKPVMLFLEDHQLVNNAFLELVNSLLSGGEVPGLFTPEELAKELAPLDKARDEDPLYTGPSNSYAFFSYRIRRNLHIVVSMDPSNEMFRSRCEANPALFTRCSVQWLEGWSVKGLQQIAAARLTELVESSPELMKLGRDKLINHMIHIHASSGSQTTREYLALVSLYGQIYNRKRTQVLEQQNFLKGGLGKLAEAAVTVDTLSAEAEKQRVVLKAKQAEADEALVHIQDSMLKAADRRKEVEVLKKRTAIEEVEMKERRVKVEEELSEVQPLIDAARKAVGNIKKDNIAEIRSLKMPPDAIRDVLEGVLMVLGQQDTSWNNMKTFLGKGSVKDDIINYDAHKITPEIRARCAKLLAAKGNSFEDAVIRRVSVAAAPMAQWFKANLEFSKVLERVSPLESELHRLQSSLEESQRLIKQYEEELVQLDAAVASLKAEFSKKTSEAETLKISVDKAESVLSSARQLLDGLRGEKVRWEITVGTLGEQLKELPLSSLLAAAFITYLPSHPEEHRLKVTKDWCAYLGAAEFDVTRFLSSESEMLKWKAEGLPADGLSAQNAVVILNSTSRSPLIIDPSTQASEWLKSHLRVTGQNVEVTTMADQRFTTTLELAVRFGKTLVVAEVDKVEPILYPLLRMDLDRQGPRFVVQIGDKATDYNDTFRLFLVTRNPDPYLPPDARSLLAVTNFTVTRSGLEGQLLGLTLQKERPELEEQKSTMLRQEDECKVALAELERNLLQTLATSTGNILENKDLLDKLNETKTRSATVEKALTESKTLQASLDQQREVYRPIAARGSVMYFLLADLQALNQMYTFSLSVFLNLFKKALDRDTPPGGDVTARIALLAESLLELVFAYVSRSLFNADRLTFGMHMARHLQPSLFPEAQWAFFLGKPVPDSASPPPKPSWVREEQAGAFSALAAAFPQLVAAAELADSALWAQWASGATDALPGKIAGGKVNPFQQLLLVKAFRPDRLQSAMSSFICGTLNIKSVSPPPFSLKALIEGETRPDEPVLFITTPGADPSQELSEYAAQTMGKERWYFEVAMGQGQAEKAVTLLRECAKNGDWLVLKNVHLAVSWLPSLEKELLMLQKHDNFRIFLTSEPHPKFPSTLLEMSLKVTFEAPPGMKKNLQRTYEAWSAEYLASGPPIRAQLLFVLAWFHAVVQERRTYIPQGWTKFYEFSFADLRSGMDVITLATRAGTAPQWPLLLGLLDDAIYGGRLDNPFDSQVLLTFLRRLFSAETVGAAGGKVRPLPGSKVVVPTTNHRADYVSIISALPDVDTPGLFCMPDNIDRTAQQVNSARVISQLKAMSLRADAAGGFNRAQWQAQLGPLLRLWDQLMSGASALKAAMKDIRARGTTDKGGAPIENFVALERYKGASLVALIDRTLGAIARVLKGTDTLSSGVQSSGAALLADVIPGSWDAAWEGPEAPMDYCRAVVAKALAIEGHWARCQQPGGGGLLDGSGGAGPLELSSVFHPGTFLNALRQQSARTLGCSMDMLKAVTSWETAKLKAAAGGAPVALLGGLIMQGATFDGSRLSPVAAEAPAFRAVPAMSMAWLHKDSPMAYASYMEAPLYMTSDRSKLLARVQLPVSGPEEMDGWVLAGLSLFLSV.

Positions 1 to 1704 (MSSDSRKTFV…KVAMAEATFD (1704 aa)) are stem. 150 to 157 (LGTAVRKG) provides a ligand contact to ATP. Residues 1026–1097 (QEAKGLTAKL…AHLEEQKGNL (72 aa)) adopt a coiled-coil conformation. 4 AAA regions span residues 1705 to 1929 (YTWE…VLGI), 1996 to 2211 (KALA…KAFQ), 2299 to 2544 (GMDE…WING), and 2641 to 2882 (GYER…SSGS). Residues 1743 to 1750 (GPAGTGKT), 2034 to 2041 (GPSGSGKS), 2334 to 2341 (GPEGCGKG), and 2679 to 2686 (GNSGVGRR) each bind ATP. The tract at residues 2897–3185 (QIYNRKRTQV…ISVDKAESVL (289 aa)) is stalk. 2 coiled-coil regions span residues 2930–2998 (LSAE…SEVQ) and 3120–3199 (ERVS…RGEK). 2 AAA regions span residues 3260 to 3492 (LSSE…TVEK) and 3701 to 3917 (MSSF…VITL).

Belongs to the dynein heavy chain family. As to quaternary structure, the cytoplasmic dynein complex 2 is probably composed by a DHC1B homodimer and a number of D1BLIC light intermediate chains. Interacts with FAP133, FLA10 and LC8.

It localises to the cytoplasm. The protein localises to the cytoskeleton. It is found in the flagellum basal body. The protein resides in the cell projection. Its subcellular location is the cilium. It localises to the flagellum membrane. May function as a motor for intraflagellar retrograde transport. Functions in flagellar biogenesis. The polypeptide is Cytoplasmic dynein 2 heavy chain 1 (DHC1B) (Chlamydomonas reinhardtii (Chlamydomonas smithii)).